A 369-amino-acid chain; its full sequence is UDP-N-acetylglucosamine--N-acetylmuramyl-(pentapeptide) pyrophosphoryl-undecaprenol N-acetylglucosamine transferase (369 aa).

Residues 10–12, asparagine 124, arginine 161, serine 195, and glutamine 295 each bind UDP-N-acetyl-alpha-D-glucosamine; that span reads TAG.

Belongs to the glycosyltransferase 28 family. MurG subfamily.

It is found in the cell membrane. The catalysed reaction is di-trans,octa-cis-undecaprenyl diphospho-N-acetyl-alpha-D-muramoyl-L-alanyl-D-glutamyl-meso-2,6-diaminopimeloyl-D-alanyl-D-alanine + UDP-N-acetyl-alpha-D-glucosamine = di-trans,octa-cis-undecaprenyl diphospho-[N-acetyl-alpha-D-glucosaminyl-(1-&gt;4)]-N-acetyl-alpha-D-muramoyl-L-alanyl-D-glutamyl-meso-2,6-diaminopimeloyl-D-alanyl-D-alanine + UDP + H(+). The protein operates within cell wall biogenesis; peptidoglycan biosynthesis. Functionally, cell wall formation. Catalyzes the transfer of a GlcNAc subunit on undecaprenyl-pyrophosphoryl-MurNAc-pentapeptide (lipid intermediate I) to form undecaprenyl-pyrophosphoryl-MurNAc-(pentapeptide)GlcNAc (lipid intermediate II). This Acidothermus cellulolyticus (strain ATCC 43068 / DSM 8971 / 11B) protein is UDP-N-acetylglucosamine--N-acetylmuramyl-(pentapeptide) pyrophosphoryl-undecaprenol N-acetylglucosamine transferase.